A 274-amino-acid polypeptide reads, in one-letter code: Secreted RxLR effector protein 40 (274 aa).

The signal sequence occupies residues 1-21 (MRLYTQVVAASLVATLAIVDS). Positions 35–53 (RFLRQDNATVARVSEDGER) match the RxLR-dEER motif. N-linked (GlcNAc...) asparagine glycosylation is found at Asn-41, Asn-74, and Asn-258.

It belongs to the RxLR effector family.

It is found in the secreted. The protein localises to the host nucleus. It localises to the host cytoplasm. In terms of biological role, secreted effector that completely suppresses the host cell death induced by cell death-inducing proteins. The protein is Secreted RxLR effector protein 40 of Plasmopara viticola (Downy mildew of grapevine).